The sequence spans 248 residues: Large ribosomal subunit protein uL4 (248 aa).

The disordered stretch occupies residues 44–109; it reads QDTGTDEYAG…LDINTKERKL (66 aa). The segment covering 92–109 has biased composition (basic and acidic residues); sequence PKAEKDRGLDINTKERKL.

This sequence belongs to the universal ribosomal protein uL4 family. In terms of assembly, part of the 50S ribosomal subunit.

Functionally, one of the primary rRNA binding proteins, this protein initially binds near the 5'-end of the 23S rRNA. It is important during the early stages of 50S assembly. It makes multiple contacts with different domains of the 23S rRNA in the assembled 50S subunit and ribosome. Its function is as follows. Forms part of the polypeptide exit tunnel. The protein is Large ribosomal subunit protein uL4 of Natronomonas pharaonis (strain ATCC 35678 / DSM 2160 / CIP 103997 / JCM 8858 / NBRC 14720 / NCIMB 2260 / Gabara) (Halobacterium pharaonis).